The primary structure comprises 355 residues: Peptide chain release factor 1 (355 aa).

Residue Gln-233 is modified to N5-methylglutamine.

It belongs to the prokaryotic/mitochondrial release factor family. In terms of processing, methylated by PrmC. Methylation increases the termination efficiency of RF1.

The protein localises to the cytoplasm. Peptide chain release factor 1 directs the termination of translation in response to the peptide chain termination codons UAG and UAA. This chain is Peptide chain release factor 1, found in Clostridium tetani (strain Massachusetts / E88).